The following is a 579-amino-acid chain: MKKLFLFFTLIFTAFAANSGLFDKKQTFLKVDDAFAFSATLSTDKSQLQAHWDIADGYYLYQDKISAELVGKSNPLSLHTQQAAELHQDPYFGEVKVFTHSIDGIFRGTFNNADDKVEITYQGCTEGFCYPPETKVLRIGDLAVSQEQIVEKTVEKNTALLSEQDRLADGLFHSKWTIFGFFLLGLGLAFTPCVLPMLPLLSAIVIGQQQRPNMMRAFSLAFLYVQGMALTYTLLGLAVAAIGLPFQIALQHPYVMIGLSILFVALALSMFGLFTIQLPNSLQNKLNTWSQKQTSGAFGGAFAMGMIAGLVASPCTSAPLSGALLYVAQSGDLFTGAATLYLLALGMGVPLMLITLFGNKILPKSGEWMNTVKQTFGFVMLALPVFLLSRILPEVWEPRLWAGLATVFFIWFALQMSKNGFGYAIKIISFALAMVTVQPLQNWIWQTQTTTQSAVENMPVSQVKFKQIKNTEELDRTLAENPHSIAMLDLYADWCVACKEFEKLTFSDPQVQQQFQNILLLQVNMTKNSPENKALMERFNVMGLPTILFFDQQNNEIQGSRVTGFMDADAFSNWLKALH.

An N-terminal signal peptide occupies residues 1–16 (MKKLFLFFTLIFTAFA). 2 cysteine pairs are disulfide-bonded: Cys124–Cys129 and Cys193–Cys315. 8 helical membrane-spanning segments follow: residues 178–198 (IFGF…LPML), 230–250 (LTYT…QIAL), 254–274 (YVMI…FGLF), 296–316 (GAFG…SPCT), 337–357 (AATL…ITLF), 376–396 (FGFV…PEVW), 397–417 (EPRL…LQMS), and 420–440 (GFGY…VQPL). A Thioredoxin domain is found at 449–579 (TTTQSAVENM…AFSNWLKALH (131 aa)). Cysteines 495 and 498 form a disulfide.

Belongs to the thioredoxin family. DsbD subfamily.

The protein resides in the cell inner membrane. The enzyme catalyses [protein]-dithiol + NAD(+) = [protein]-disulfide + NADH + H(+). It catalyses the reaction [protein]-dithiol + NADP(+) = [protein]-disulfide + NADPH + H(+). Functionally, required to facilitate the formation of correct disulfide bonds in some periplasmic proteins and for the assembly of the periplasmic c-type cytochromes. Acts by transferring electrons from cytoplasmic thioredoxin to the periplasm. This transfer involves a cascade of disulfide bond formation and reduction steps. This is Thiol:disulfide interchange protein DsbD from Haemophilus influenzae (strain 86-028NP).